The following is a 227-amino-acid chain: Uracil-DNA glycosylase 2 (227 aa).

The active-site Proton acceptor is the aspartate 67.

Belongs to the uracil-DNA glycosylase (UDG) superfamily. UNG family.

Its subcellular location is the cytoplasm. It carries out the reaction Hydrolyzes single-stranded DNA or mismatched double-stranded DNA and polynucleotides, releasing free uracil.. Its function is as follows. Excises uracil residues from the DNA which can arise as a result of misincorporation of dUMP residues by DNA polymerase or due to deamination of cytosine. This Streptomyces coelicolor (strain ATCC BAA-471 / A3(2) / M145) protein is Uracil-DNA glycosylase 2 (ung2).